A 63-amino-acid chain; its full sequence is Alpha-conotoxin-like PuSG1.2 (63 aa).

The N-terminal stretch at 1–21 is a signal peptide; that stretch reads MRCLALLVVTLLLFTATATTG. A propeptide spanning residues 22 to 43 is cleaved from the precursor; sequence ASNGMNAAASGEAPDSISLAVR. 2 disulfide bridges follow: Cys-46–Cys-52 and Cys-47–Cys-60. Positions 48–50 are lacks the Ser-Xaa-Pro motif that is crucial for potent interaction with nAChR; that stretch reads PDP.

This sequence belongs to the conotoxin A superfamily. In terms of tissue distribution, expressed by the salivary gland.

Its subcellular location is the secreted. Alpha-conopeptides-like may act on postsynaptic membranes, they bind to the nicotinic acetylcholine receptors (nAChR) and thus inhibit them. Has possibly a distinct nAChR binding mode from other alpha-conotoxins, due to a different three residue motif (lacks the Ser-Xaa-Pro motif). The protein is Alpha-conotoxin-like PuSG1.2 of Conus pulicarius (Flea-bitten cone).